Reading from the N-terminus, the 64-residue chain is Large ribosomal subunit protein bL33c (64 aa).

It belongs to the bacterial ribosomal protein bL33 family.

The protein localises to the plastid. It is found in the chloroplast. This chain is Large ribosomal subunit protein bL33c (rpl33), found in Trieres chinensis (Marine centric diatom).